The sequence spans 273 residues: Large ribosomal subunit protein uL2 (273 aa).

The segment at Arg221–Thr263 is disordered. The segment covering Lys253 to Thr263 has biased composition (basic residues).

It belongs to the universal ribosomal protein uL2 family. As to quaternary structure, part of the 50S ribosomal subunit. Forms a bridge to the 30S subunit in the 70S ribosome.

Functionally, one of the primary rRNA binding proteins. Required for association of the 30S and 50S subunits to form the 70S ribosome, for tRNA binding and peptide bond formation. It has been suggested to have peptidyltransferase activity; this is somewhat controversial. Makes several contacts with the 16S rRNA in the 70S ribosome. The protein is Large ribosomal subunit protein uL2 of Histophilus somni (strain 129Pt) (Haemophilus somnus).